We begin with the raw amino-acid sequence, 160 residues long: Crossover junction endodeoxyribonuclease RuvC (160 aa).

Active-site residues include aspartate 9, glutamate 68, and aspartate 141. The Mg(2+) site is built by aspartate 9, glutamate 68, and aspartate 141.

Belongs to the RuvC family. Homodimer which binds Holliday junction (HJ) DNA. The HJ becomes 2-fold symmetrical on binding to RuvC with unstacked arms; it has a different conformation from HJ DNA in complex with RuvA. In the full resolvosome a probable DNA-RuvA(4)-RuvB(12)-RuvC(2) complex forms which resolves the HJ. The cofactor is Mg(2+).

The protein resides in the cytoplasm. It carries out the reaction Endonucleolytic cleavage at a junction such as a reciprocal single-stranded crossover between two homologous DNA duplexes (Holliday junction).. The RuvA-RuvB-RuvC complex processes Holliday junction (HJ) DNA during genetic recombination and DNA repair. Endonuclease that resolves HJ intermediates. Cleaves cruciform DNA by making single-stranded nicks across the HJ at symmetrical positions within the homologous arms, yielding a 5'-phosphate and a 3'-hydroxyl group; requires a central core of homology in the junction. The consensus cleavage sequence is 5'-(A/T)TT(C/G)-3'. Cleavage occurs on the 3'-side of the TT dinucleotide at the point of strand exchange. HJ branch migration catalyzed by RuvA-RuvB allows RuvC to scan DNA until it finds its consensus sequence, where it cleaves and resolves the cruciform DNA. This is Crossover junction endodeoxyribonuclease RuvC from Campylobacter jejuni subsp. jejuni serotype O:23/36 (strain 81-176).